The sequence spans 2230 residues: DNA polymerase epsilon catalytic subunit A (2230 aa).

Polar residues predominate over residues 1–19 (MPTRQPSKYGNKFRSSSAS). Positions 1-24 (MPTRQPSKYGNKFRSSSASFKPKR) are disordered. Zn(2+)-binding residues include Cys-2101, Cys-2104, Cys-2136, and Cys-2139. Residues 2101–2139 (CNACCLIRDLDLCRDEDVLPEMGSDPNKAAPKPWRCPFC) form a CysA-type zinc finger. [4Fe-4S] cluster is bound by residues Cys-2170, Cys-2173, Cys-2185, and Cys-2187. Positions 2170 to 2187 (CSKCGGLKISDFMEHCSC) match the CysB motif motif.

The protein belongs to the DNA polymerase type-B family. In terms of assembly, heterotetramer. Consists of 4 subunits: pol2, dpb2, dpb3 and dpb4. The cofactor is [4Fe-4S] cluster.

The protein resides in the nucleus. It carries out the reaction DNA(n) + a 2'-deoxyribonucleoside 5'-triphosphate = DNA(n+1) + diphosphate. Its function is as follows. DNA polymerase II participates in chromosomal DNA replication. The protein is DNA polymerase epsilon catalytic subunit A (pol2) of Aspergillus fumigatus (strain ATCC MYA-4609 / CBS 101355 / FGSC A1100 / Af293) (Neosartorya fumigata).